A 223-amino-acid chain; its full sequence is DNA mismatch repair protein MutH (223 aa).

The protein belongs to the MutH family.

Its subcellular location is the cytoplasm. In terms of biological role, sequence-specific endonuclease that cleaves unmethylated GATC sequences. It is involved in DNA mismatch repair. The sequence is that of DNA mismatch repair protein MutH from Shewanella sp. (strain W3-18-1).